The chain runs to 161 residues: MNIDDDLQALTKQEATLTFSHFDHNTAWELGSALRSAAERARLSIAIEIQLAGQTLFYYAMPGTTPDIADWVRRKRNVVNHFHKSSYAIGLRLQQRQSTLEERYGLSVRDYSAHGGAFPINLAGLGCIGTISISGSPQLEDHNLLVSTLAHFLGLSLPAVH.

It belongs to the UPF0303 family.

The protein is UPF0303 protein Spro_1996 of Serratia proteamaculans (strain 568).